Reading from the N-terminus, the 356-residue chain is Glutamine synthetase PR-2 (356 aa).

The GS beta-grasp domain maps to 19 to 99 (IIAEYIWVGG…VICDVYTPAG (81 aa)). The disordered stretch occupies residues 37-66 (ARTLPGPVDDPAKLPKWNYDGSSTDQAPGD). Residues 106–356 (KRYDAAKIFS…IAETTILWKP (251 aa)) form the GS catalytic domain.

Belongs to the glutamine synthetase family. Homooctamer. Roots.

Its subcellular location is the cytoplasm. The catalysed reaction is L-glutamate + NH4(+) + ATP = L-glutamine + ADP + phosphate + H(+). The sequence is that of Glutamine synthetase PR-2 from Phaseolus vulgaris (Kidney bean).